Consider the following 539-residue polypeptide: Phenylacetyl-CoA ligase epaB (539 aa).

188–199 contacts AMP; it reads RLFSSGTTGLPK. The AMP-binding stretch occupies residues 449 to 525; the sequence is EVEGVLRNHP…DAIPRNASGK (77 aa).

It belongs to the ATP-dependent AMP-binding enzyme family.

Its pathway is secondary metabolite biosynthesis. In terms of biological role, phenylacetyl-CoA ligase; part of the gene cluster that mediates the biosynthesis of nigerpyrone and its derivatives carbonarone A and pestalamide A. The biosynthesis pathway begins with the polyketide assembly by epaA to form phenylacetyl triketide precursor from successive condensation of two malonyl-CoA, presumably with one phenylacetyl-CoA starter unit produced by the phenylacetyl-CoA ligase epaB. For the nigerpyrone biosynthesis, the reactive polyketide chain is released as an aldehyde through the R-domain. A nonenzymatic cyclization and dehydration may create nigerpyrone. For the biosynthesis of carbonarone A and pestalamide A, an extra methyl group is added through the C-methyltransferase domain. Several further steps involving the dehydrogenase orf1, the cytochrome P450 monooxygenase orf2 and the FAD-dependent monooxygenase orf3 are required to form a carbonarone A precursor which is converted to carbonarone A via cyclization. The O-acetyltransferase epaC could catalyze the transfer of 2-methylsuccinyl-CoA, a common intermediate in the ethylmalonyl-CoA pathway, to generate the final product pestalamide A. This Aspergillus niger (strain ATCC MYA-4892 / CBS 513.88 / FGSC A1513) protein is Phenylacetyl-CoA ligase epaB.